The chain runs to 388 residues: Lysocardiolipin acyltransferase 1 (388 aa).

Transmembrane regions (helical) follow at residues 9–29 and 46–66; these read FLLF…GPLL and IVAT…GVKV. The short motif at 85 to 90 is the HXXXXD motif element; the sequence is HRTRLD. Helical transmembrane passes span 321–341 and 342–362; these read IILV…CASL and CLCP…LCQQ.

It belongs to the 1-acyl-sn-glycerol-3-phosphate acyltransferase family.

It localises to the endoplasmic reticulum membrane. The enzyme catalyses a 1-acyl-sn-glycero-3-phosphate + an acyl-CoA = a 1,2-diacyl-sn-glycero-3-phosphate + CoA. It carries out the reaction a 1-acyl-sn-glycero-3-phospho-(1D-myo-inositol) + an acyl-CoA = a 1,2-diacyl-sn-glycero-3-phospho-(1D-myo-inositol) + CoA. It catalyses the reaction 1-acyl-sn-glycero-3-phospho-(1'-sn-glycerol) + an acyl-CoA = a 1,2-diacyl-sn-glycero-3-phospho-(1'-sn-glycerol) + CoA. The catalysed reaction is 1-hexadecanoyl-sn-glycero-3-phosphate + (9Z)-octadecenoyl-CoA = 1-hexadecanoyl-2-(9Z-octadecenoyl)-sn-glycero-3-phosphate + CoA. The enzyme catalyses 1-(9Z-octadecenoyl)-sn-glycero-3-phosphate + (9Z)-octadecenoyl-CoA = 1,2-di-(9Z-octadecenoyl)-sn-glycero-3-phosphate + CoA. It carries out the reaction 1-(9Z,12Z)-octadecadienoyl-sn-glycero-3-phosphate + (9Z)-octadecenoyl-CoA = 1-(9Z,12Z)-octadecadienoyl-2-(9Z)-octadecenoyl-sn-glycero-3-phosphate + CoA. It catalyses the reaction 1-(9Z,12Z,15Z)-octadecatrienoyl-sn-glycero-3-phosphate + (9Z)-octadecenoyl-CoA = 1-(9Z,12Z,15Z)-octadecatrienoyl-2-(9Z)-octadecenoyl-sn-glycero-3-phosphate + CoA. The catalysed reaction is 1-(9Z-octadecenoyl)-sn-glycero-3-phosphate + hexadecanoyl-CoA = 1-(9Z)-octadecenoyl-2-hexadecanoyl-sn-glycero-3-phosphate + CoA. The enzyme catalyses 1-(9Z-octadecenoyl)-sn-glycero-3-phosphate + octadecanoyl-CoA = 1-(9Z-octadecenoyl)-2-octadecanoyl-sn-glycero-3-phosphate + CoA. It carries out the reaction 1-acyl-sn-glycero-3-phospho-(1'-sn-glycerol) + (9Z)-octadecenoyl-CoA = 1-acyl-2-(9Z-octadecenoyl)-sn-glycero-3-phospho-(1'-sn-glycerol) + CoA. It catalyses the reaction a 1-acyl-sn-glycero-3-phospho-(1D-myo-inositol) + (9Z)-octadecenoyl-CoA = a 1-acyl-2-(9Z-octadecenoyl)-sn-glycero-3-phospho-(1D-myo-inositol) + CoA. The catalysed reaction is 1-hexadecanoyl-sn-glycero-3-phospho-(1D-myo-inositol) + hexadecanoyl-CoA = 1,2-dihexadecanoyl-sn-glycero-3-phospho-(1D-myo-inositol) + CoA. The enzyme catalyses 1-hexadecanoyl-sn-glycero-3-phospho-(1D-myo-inositol) + octadecanoyl-CoA = 1-hexadecanoyl-2-octadecanoyl-sn-glycero-3-phospho-(1D-myo-inositol) + CoA. It carries out the reaction 1-hexadecanoyl-sn-glycero-3-phospho-(1D-myo-inositol) + (9Z)-octadecenoyl-CoA = 1-hexadecanoyl-2-(9Z-octadecenoyl)-sn-glycero-3-phospho-(1D-myo-inositol) + CoA. It catalyses the reaction 1-hexadecanoyl-sn-glycero-3-phospho-(1D-myo-inositol) + (9Z,12Z)-octadecadienoyl-CoA = 1-hexadecanoyl-2-(9Z,12Z-octadecadienoyl)-sn-glycero-3-phospho-(1D-myo-inositol) + CoA. The catalysed reaction is 1-hexadecanoyl-sn-glycero-3-phospho-(1D-myo-inositol) + (5Z,8Z,11Z,14Z)-eicosatetraenoyl-CoA = 1-hexadecanoyl-2-(5Z,8Z,11Z,14Z-eicosatetraenoyl)-sn-glycero-3-phospho-D-myo-inositol + CoA. The enzyme catalyses 1-hexadecanoyl-sn-glycero-3-phospho-(1'-sn-glycerol) + hexadecanoyl-CoA = 1,2-dihexadecanoyl-sn-glycero-3-phospho-(1'-sn-glycerol) + CoA. It carries out the reaction 1-hexadecanoyl-sn-glycero-3-phospho-(1'-sn-glycerol) + octadecanoyl-CoA = 1-hexadecanoyl-2-octadecanoyl-sn-glycero-3-phospho-(1'-sn-glycerol) + CoA. It catalyses the reaction 1-hexadecanoyl-sn-glycero-3-phospho-(1'-sn-glycerol) + (9Z)-octadecenoyl-CoA = 1-hexadecanoyl-2-(9Z-octadecenoyl)-sn-glycero-3-phospho-(1'-sn-glycerol) + CoA. The catalysed reaction is 1-hexadecanoyl-sn-glycero-3-phospho-(1'-sn-glycerol) + (9Z,12Z)-octadecadienoyl-CoA = 1-hexadecanoyl-2-(9Z,12Z-octadecadienoyl)-sn-glycero-3-phospho-(1'-sn-glycerol) + CoA. The enzyme catalyses 1-tetradecanoyl-sn-glycero-3-phospho-(1'-sn-glycerol) + (9Z)-octadecenoyl-CoA = 1-tetradecanoyl-2-(9Z-octadecenoyl)-sn-glycero-3-phospho-(1'-sn-glycerol) + CoA. It carries out the reaction 1-octadecanoyl-sn-glycero-3-phospho-(1'-sn-glycerol) + (9Z)-octadecenoyl-CoA = 1-octadecanoyl-2-(9Z-octadecenoyl)-sn-glycero-3-phospho-(1'-sn-glycerol) + CoA. It catalyses the reaction 1-(9Z-octadecenoyl)-sn-glycero-3-phospho-(1'-sn-glycerol) + (9Z)-octadecenoyl-CoA = 1,2-di-(9Z-octadecenoyl)-sn-glycero-3-phospho-(1'-sn-glycerol) + CoA. The catalysed reaction is 1-hexadecanoyl-sn-glycero-3-phospho-(1D-myo-inositol) + dodecanoyl-CoA = 1-hexadecanoyl-2-dodecanoyl-sn-glycero-3-phospho-(1D-myo-inositol) + CoA. The enzyme catalyses 1',3'-bis-[1-acyl-sn-glycero-3-phospho]-glycerol + (9Z)-octadecenoyl-CoA = 1'-[1-acyl-2-(9Z)-octadecenoyl-sn-glycero-3-phospho],3'-[1-acyl,2-hydroxy-sn-glycero-3-phospho]-glycerol + CoA. It carries out the reaction 1'-[1,2-diacyl-sn-glycero-3-phospho],3'-[1-acyl-sn-glycero-3-phospho]-glycerol + (9Z)-octadecenoyl-CoA = 1'-[1,2-diacyl-sn-glycero-3-phospho],3'-[1-acyl,2-(9Z)-octadecenoyl-sn-glycero-3-phospho]-glycerol + CoA. It catalyses the reaction 1'-[1,2-diacyl-sn-glycero-3-phospho],3'-[1-acyl-sn-glycero-3-phospho]-glycerol + (9Z,12Z)-octadecadienoyl-CoA = 1'-[1,2-diacyl-sn-glycero-3-phospho],3'-[1-acyl,2-(9Z,12Z)-octadecadienoyl-sn-glycero-3-phospho]-glycerol + CoA. The catalysed reaction is 1'-[1,2-diacyl-sn-glycero-3-phospho],3'-[1-acyl-sn-glycero-3-phospho]-glycerol + dodecanoyl-CoA = 1'-[1,2-diacyl-sn-glycero-3-phospho],3'-[1-acyl,2-dodecanoyl-sn-glycero-3-phospho]-glycerol + CoA. The enzyme catalyses 1',3'-bis-[1-acyl-sn-glycero-3-phospho]-glycerol + dodecanoyl-CoA = 1'-[1-acyl-2-dodecanoyl-sn-glycero-3-phospho],3'-[1-acyl,2-hydroxy-sn-glycero-3-phospho]-glycerol + CoA. It carries out the reaction a 1-acyl-sn-glycero-3-phosphate + (9Z)-octadecenoyl-CoA = a 1-acyl-2-(9Z-octadecenoyl)-sn-glycero-3-phosphate + CoA. It catalyses the reaction 1',3'-bis-[1-acyl-sn-glycero-3-phospho]-glycerol + (9Z,12Z)-octadecadienoyl-CoA = 1'-[1-acyl-2-(9Z,12Z)-octadecadienoyl-sn-glycero-3-phospho],3'-[1-acyl,2-hydroxy-sn-glycero-3-phospho]-glycerol + CoA. The catalysed reaction is 1',3'-bis-[1-acyl-sn-glycero-3-phospho]-glycerol + hexadecanoyl-CoA = 1'-[1-acyl-2-hexadecanoyl-sn-glycero-3-phospho],3'-[1-acyl,2-hydroxy-sn-glycero-3-phospho]-glycerol + CoA. The enzyme catalyses 1',3'-bis-[1-acyl-sn-glycero-3-phospho]-glycerol + octadecanoyl-CoA = 1'-[1-acyl-2-octadecanoyl-sn-glycero-3-phospho],3'-[1-acyl,2-hydroxy-sn-glycero-3-phospho]-glycerol + CoA. It carries out the reaction 1'-[1,2-diacyl-sn-glycero-3-phospho],3'-[1-acyl-sn-glycero-3-phospho]-glycerol + octanoyl-CoA = 1'-[1,2-diacyl-sn-glycero-3-phospho],3'-[1-acyl,2-octanoyl-sn-glycero-3-phospho]-glycerol + CoA. It catalyses the reaction 1',3'-bis-[1-acyl-sn-glycero-3-phospho]-glycerol + octanoyl-CoA = 1'-[1-acyl-2-octanoyl-sn-glycero-3-phospho],3'-[1-acyl,2-hydroxy-sn-glycero-3-phospho]-glycerol + CoA. The catalysed reaction is 1'-[1,2-diacyl-sn-glycero-3-phospho],3'-[1-acyl-sn-glycero-3-phospho]-glycerol + hexadecanoyl-CoA = 1'-[1,2-diacyl-sn-glycero-3-phospho],3'-[1-acyl,2-hexadecanoyl-sn-glycero-3-phospho]-glycerol + CoA. The enzyme catalyses 1'-[1,2-diacyl-sn-glycero-3-phospho],3'-[1-acyl-sn-glycero-3-phospho]-glycerol + (5Z,8Z,11Z,14Z)-eicosatetraenoyl-CoA = 1'-[1,2-diacyl-sn-glycero-3-phospho],3'-[1-acyl,2-(5Z,8Z,11Z,14Z)-eicosatetraenoyl-sn-glycero-3-phospho]-glycerol + CoA. It carries out the reaction 1',3'-bis-[1-acyl-sn-glycero-3-phospho]-glycerol + (5Z,8Z,11Z,14Z)-eicosatetraenoyl-CoA = 1'-[1-acyl-2-(5Z,8Z,11Z,14Z)-eicosatetraenoyl-sn-glycero-3-phospho],3'-[1-acyl,2-hydroxy-sn-glycero-3-phospho]-glycerol + CoA. It catalyses the reaction a 1-acyl-sn-glycero-3-phospho-(1D-myo-inositol) + octadecanoyl-CoA = a 1-acyl-2-octadecanoyl-sn-glycero-3-phospho-(1D-myo-inositol) + CoA. The catalysed reaction is a 2-acyl-sn-glycero-3-phospho-D-myo-inositol + octadecanoyl-CoA = 1-octadecanoyl-2-acyl-sn-glycero-3-phospho-1D-myo-inositol + CoA. It participates in phospholipid metabolism; CDP-diacylglycerol biosynthesis; CDP-diacylglycerol from sn-glycerol 3-phosphate: step 2/3. Functionally, exhibits acyl-CoA:lysocardiolipin acyltransferase (ALCAT) activity; catalyzes the reacylation of lyso-cardiolipin to cardiolipin (CL), a key step in CL remodeling. Recognizes both monolysocardiolipin and dilysocardiolipin as substrates with a preference for linoleoyl-CoA and oleoyl-CoA as acyl donors. Also exhibits 1-acyl-sn-glycerol-3-phosphate acyltransferase activity (AGPAT) activity; converts 1-acyl-sn-glycerol-3- phosphate (lysophosphatidic acid or LPA) into 1,2-diacyl-sn-glycerol-3- phosphate (phosphatidic acid or PA) by incorporating an acyl moiety at the sn-2 position of the glycerol backbone. Possesses both lysophosphatidylinositol acyltransferase (LPIAT) and lysophosphatidylglycerol acyltransferase (LPGAT) activities. Required for establishment of the hematopoietic and endothelial lineages. This Danio rerio (Zebrafish) protein is Lysocardiolipin acyltransferase 1 (lclat1).